Reading from the N-terminus, the 764-residue chain is A-type ATP synthase subunit A (764 aa).

The protein belongs to the ATPase alpha/beta chains family. In terms of assembly, has multiple subunits with at least A(3), B(3), C, D, E, F, H, I and proteolipid K(x). This protein undergoes a protein self splicing that involves a post-translational excision of the VDE intervening region (intein) followed by peptide ligation.

The protein resides in the cell membrane. It catalyses the reaction ATP + H2O + 4 H(+)(in) = ADP + phosphate + 5 H(+)(out). In terms of biological role, component of the A-type ATP synthase that produces ATP from ADP in the presence of a proton gradient across the membrane. The A chain is the catalytic subunit. The chain is A-type ATP synthase subunit A from Thermoplasma acidophilum (strain ATCC 25905 / DSM 1728 / JCM 9062 / NBRC 15155 / AMRC-C165).